A 142-amino-acid chain; its full sequence is Large ribosomal subunit protein uL13 (142 aa).

It belongs to the universal ribosomal protein uL13 family. In terms of assembly, part of the 50S ribosomal subunit.

Its function is as follows. This protein is one of the early assembly proteins of the 50S ribosomal subunit, although it is not seen to bind rRNA by itself. It is important during the early stages of 50S assembly. In Shewanella denitrificans (strain OS217 / ATCC BAA-1090 / DSM 15013), this protein is Large ribosomal subunit protein uL13.